Consider the following 206-residue polypeptide: Small ribosomal subunit protein uS4 (206 aa).

The S4 RNA-binding domain occupies 98 to 155 (TRLDNVVYRLGWALSRDQARQLVSHGKIAVNGKRVNIPSYNLKPGDVVELLDKDLIPV).

This sequence belongs to the universal ribosomal protein uS4 family. As to quaternary structure, part of the 30S ribosomal subunit. Contacts protein S5. The interaction surface between S4 and S5 is involved in control of translational fidelity.

One of the primary rRNA binding proteins, it binds directly to 16S rRNA where it nucleates assembly of the body of the 30S subunit. In terms of biological role, with S5 and S12 plays an important role in translational accuracy. The protein is Small ribosomal subunit protein uS4 of Dictyoglomus thermophilum (strain ATCC 35947 / DSM 3960 / H-6-12).